A 474-amino-acid chain; its full sequence is Probable glycine dehydrogenase (decarboxylating) subunit 2 (474 aa).

Position 262 is an N6-(pyridoxal phosphate)lysine (lysine 262).

The protein belongs to the GcvP family. C-terminal subunit subfamily. The glycine cleavage system is composed of four proteins: P, T, L and H. In this organism, the P 'protein' is a heterodimer of two subunits. It depends on pyridoxal 5'-phosphate as a cofactor.

It catalyses the reaction N(6)-[(R)-lipoyl]-L-lysyl-[glycine-cleavage complex H protein] + glycine + H(+) = N(6)-[(R)-S(8)-aminomethyldihydrolipoyl]-L-lysyl-[glycine-cleavage complex H protein] + CO2. Functionally, the glycine cleavage system catalyzes the degradation of glycine. The P protein binds the alpha-amino group of glycine through its pyridoxal phosphate cofactor; CO(2) is released and the remaining methylamine moiety is then transferred to the lipoamide cofactor of the H protein. The polypeptide is Probable glycine dehydrogenase (decarboxylating) subunit 2 (Thermotoga maritima (strain ATCC 43589 / DSM 3109 / JCM 10099 / NBRC 100826 / MSB8)).